The primary structure comprises 249 residues: ATP synthase subunit a, chloroplastic (249 aa).

5 consecutive transmembrane segments (helical) span residues 40–60 (QVLITSWVVIAILLGSAVLAI), 97–117 (VPFIGTLFLFIFVSNWSGALL), 136–156 (INTTVALALLTSAAYFYAGLS), 201–221 (LVVVVLVSLVPLVVPIPVMFL), and 222–242 (GLFTSGIQALIFATLAAAYIG).

Belongs to the ATPase A chain family. F-type ATPases have 2 components, CF(1) - the catalytic core - and CF(0) - the membrane proton channel. CF(1) has five subunits: alpha(3), beta(3), gamma(1), delta(1), epsilon(1). CF(0) has four main subunits: a, b, b' and c.

It localises to the plastid. The protein resides in the chloroplast thylakoid membrane. Its function is as follows. Key component of the proton channel; it plays a direct role in the translocation of protons across the membrane. The polypeptide is ATP synthase subunit a, chloroplastic (Capsella bursa-pastoris (Shepherd's purse)).